Reading from the N-terminus, the 493-residue chain is Glutamyl-tRNA(Gln) amidotransferase subunit A (493 aa).

Active-site charge relay system residues include Lys79 and Ser159. Ser183 (acyl-ester intermediate) is an active-site residue.

This sequence belongs to the amidase family. GatA subfamily. In terms of assembly, heterotrimer of A, B and C subunits.

The catalysed reaction is L-glutamyl-tRNA(Gln) + L-glutamine + ATP + H2O = L-glutaminyl-tRNA(Gln) + L-glutamate + ADP + phosphate + H(+). In terms of biological role, allows the formation of correctly charged Gln-tRNA(Gln) through the transamidation of misacylated Glu-tRNA(Gln) in organisms which lack glutaminyl-tRNA synthetase. The reaction takes place in the presence of glutamine and ATP through an activated gamma-phospho-Glu-tRNA(Gln). This is Glutamyl-tRNA(Gln) amidotransferase subunit A from Sinorhizobium fredii (strain NBRC 101917 / NGR234).